A 175-amino-acid chain; its full sequence is ATP-dependent protease subunit HslV (175 aa).

Thr2 is an active-site residue. Na(+)-binding residues include Gly158, Cys161, and Thr164.

The protein belongs to the peptidase T1B family. HslV subfamily. In terms of assembly, a double ring-shaped homohexamer of HslV is capped on each side by a ring-shaped HslU homohexamer. The assembly of the HslU/HslV complex is dependent on binding of ATP.

The protein localises to the cytoplasm. It catalyses the reaction ATP-dependent cleavage of peptide bonds with broad specificity.. Its activity is regulated as follows. Allosterically activated by HslU binding. Protease subunit of a proteasome-like degradation complex believed to be a general protein degrading machinery. In Haemophilus influenzae (strain ATCC 51907 / DSM 11121 / KW20 / Rd), this protein is ATP-dependent protease subunit HslV.